The primary structure comprises 824 residues: Lysine-specific histone demethylase 1B homolog (824 aa).

The interval 1-31 (MTTELEIDDRKEEEAQIPGETSESEEGDEPV) is disordered. Residues 245–346 (PFTDVIANIV…YGAFDFRIDP (102 aa)) form the SWIRM domain. FAD-binding positions include 352–407 (PKIA…AQII), Val-579, Glu-788, and 796–798 (QTM).

Belongs to the flavin monoamine oxidase family. It depends on FAD as a cofactor. In hermaphrodites, expressed in gut cells, embryonic cells and sheath cells. Not expressed in sperm or pharyngeal neurons.

Its subcellular location is the nucleus. It catalyses the reaction N(6),N(6)-dimethyl-L-lysyl(4)-[histone H3] + 2 A + 2 H2O = L-lysyl(4)-[histone H3] + 2 formaldehyde + 2 AH2. Histone demethylase that demethylates di-methylated 'Lys-4' of histone H3, a specific tag for epigenetic transcriptional activation, thereby acting as a corepressor. Acts by oxidizing the substrate by FAD to generate the corresponding imine that is subsequently hydrolyzed. Plays a role in the mitotic development of the germline. May be involved in H3 demethylation in mitotic cells including gut and embryonic cells. Plays a role in sensitivity upon interstrand cross-link DNA damage, probably by positively regulating the expression of mlh-1. Plays a role in developmental growth and lifespan regulation in response to ultraviolet-induced damage. No obvious role in larval development, sex chromosome segregation or for regulating meiotic crossover frequency. The chain is Lysine-specific histone demethylase 1B homolog from Caenorhabditis elegans.